Reading from the N-terminus, the 265-residue chain is Undecaprenyl-diphosphatase (265 aa).

The next 8 membrane-spanning stretches (helical) occupy residues 1 to 21, 39 to 59, 87 to 107, 110 to 130, 144 to 164, 187 to 207, 217 to 237, and 244 to 264; these read MDFL…FLPI, QGVG…ILYF, WAVV…LDYI, ALRA…LLAA, IGFK…IPGT, FSFF…LLTI, LGFL…IHFF, and FGMW…YLLF.

The protein belongs to the UppP family.

The protein resides in the cell inner membrane. It carries out the reaction di-trans,octa-cis-undecaprenyl diphosphate + H2O = di-trans,octa-cis-undecaprenyl phosphate + phosphate + H(+). Catalyzes the dephosphorylation of undecaprenyl diphosphate (UPP). Confers resistance to bacitracin. The sequence is that of Undecaprenyl-diphosphatase from Idiomarina loihiensis (strain ATCC BAA-735 / DSM 15497 / L2-TR).